Here is a 513-residue protein sequence, read N- to C-terminus: MEMAKEQELILVLDFGSQYNQLITRRIREMGVYSELHDHEISMEEIKRLNPKGIILSGGPNSVYEEDSFTIDPEIYNLGVPILGICYGMQLTTKLLGGKVERANEREYGKAIINAKTDELFFGLPEEQNVWMSHSDKVIEIPEGFEVIADSPSTNYAAIEDKSRRIYGVQFHPEVRHTEYGNDLLRNFVRRVCDCIGEWSMENFIEIEIEKIRNQVGDRKVLCAMSGGVDSSVVAVLLHKAIGDQLTCIFVDHGLLRKGEGDMVMEQFGEGFNMNIIRVDAQERFMSKLQGVSDPEQKRKIIGNEFIYVFDDEASKLKGVDFLAQGTLYTDVIESGTKTAQTIKSHHNVGGLPEDMEFQLIEPINTLFKDEVRELGIELGIPEHLVWRQPFPGPGLGIRVLGEITEDKLEIVRESDAILRQVIREEGLEREIWQYFTVLPGIQSVGVMGDYRTYDHTVGIRAVTSIDGMTSDFARIDWEVLQKISSRIVNEVDHVNRVVYDITSKPPSTIEWE.

The region spanning 9–198 (LILVLDFGSQ…VRRVCDCIGE (190 aa)) is the Glutamine amidotransferase type-1 domain. Cys-86 functions as the Nucleophile in the catalytic mechanism. Active-site residues include His-172 and Glu-174. The GMPS ATP-PPase domain occupies 199–388 (WSMENFIEIE…LGIPEHLVWR (190 aa)). 226–232 (SGGVDSS) is a binding site for ATP.

In terms of assembly, homodimer.

The enzyme catalyses XMP + L-glutamine + ATP + H2O = GMP + L-glutamate + AMP + diphosphate + 2 H(+). It functions in the pathway purine metabolism; GMP biosynthesis; GMP from XMP (L-Gln route): step 1/1. Catalyzes the synthesis of GMP from XMP. This Staphylococcus saprophyticus subsp. saprophyticus (strain ATCC 15305 / DSM 20229 / NCIMB 8711 / NCTC 7292 / S-41) protein is GMP synthase [glutamine-hydrolyzing].